The chain runs to 326 residues: Glyoxalase I (326 aa).

2 VOC domains span residues 22 to 167 (LLNH…LITY) and 182 to 322 (KFNH…VVPH). Histidine 25 provides a ligand contact to Zn(2+). Arginine 29 serves as a coordination point for substrate. Glutamate 89 lines the Zn(2+) pocket. Substrate-binding positions include asparagine 93, arginine 113, histidine 117, and 147 to 148 (RQ). Zn(2+) is bound at residue histidine 117. Glutamate 163 is a Zn(2+) binding site. Catalysis depends on proton donor/acceptor residues glutamate 163 and glutamate 318.

This sequence belongs to the glyoxalase I family. Monomer. It depends on Zn(2+) as a cofactor.

The catalysed reaction is (R)-S-lactoylglutathione = methylglyoxal + glutathione. Its pathway is secondary metabolite metabolism; methylglyoxal degradation; (R)-lactate from methylglyoxal: step 1/2. In terms of biological role, catalyzes the conversion of hemimercaptal, formed from methylglyoxal and glutathione, to S-lactoylglutathione. Can use gamma-glutamylcysteine as a substrate. The chain is Glyoxalase I from Saccharomyces cerevisiae (strain ATCC 204508 / S288c) (Baker's yeast).